Reading from the N-terminus, the 359-residue chain is ELAV-like protein 2 (359 aa).

The segment at 1-39 (METQLSNGPTCNNTANGPTTVNNNCSSPVDSGNTEDSKT) is disordered. 2 consecutive RRM domains span residues 39–117 (TNLI…YARP) and 125–205 (ANLY…FANN). Position 221 is a phosphoserine (Ser221). Residues 276–354 (WCIFVYNLAP…RVLQVSFKTN (79 aa)) enclose the RRM 3 domain.

Belongs to the RRM elav family. In terms of assembly, interacts with IGF2BP1. Interacts with MAP1B light chain LC1.

Its function is as follows. RNA-binding protein that binds to the 3' untranslated region (3'UTR) of target mRNAs. Seems to recognize a GAAA motif. Can bind to its own 3'UTR, the FOS 3'UTR and the ID 3'UTR. In Rattus norvegicus (Rat), this protein is ELAV-like protein 2 (Elavl2).